The primary structure comprises 84 residues: Toxin NvePTx1 (84 aa).

Residues 1-21 (MFSARLVLVFAVVLCIQLCNA) form the signal peptide. The propeptide occupies 22–34 (SWLDERAMTQEKR).

The protein belongs to the sea anemone type 5 potassium channel toxin family. Post-translationally, contains 4 disulfide bonds. In unfertilized eggs and early post-fertilization stages, is expressed uniformly. In gastrulae, the expression becomes spatially-localized and seems to be absent from the oral and aboral poles. In planulae, the expression is clearly observed in the ectoderm in packed gland cells absent from the two body poles, and upon metamorphosis, the expression diminishes. There is two types of gland cells, one large and elongated and another small and round. This toxin is maternally deposited at both protein and RNA levels.

Its subcellular location is the secreted. It localises to the nematocyst. Neurotoxin that is probably only defensive. Acts as a voltage-gated potassium channel (Kv) inhibitor. In vivo, induces a rapid increase in swimming speed on zebrafish larvae, as well as death which occurs between 2 and 18 hours later. The chain is Toxin NvePTx1 from Nematostella vectensis (Starlet sea anemone).